A 207-amino-acid chain; its full sequence is ATP phosphoribosyltransferase (207 aa).

This sequence belongs to the ATP phosphoribosyltransferase family. Short subfamily. In terms of assembly, heteromultimer composed of HisG and HisZ subunits.

It is found in the cytoplasm. The catalysed reaction is 1-(5-phospho-beta-D-ribosyl)-ATP + diphosphate = 5-phospho-alpha-D-ribose 1-diphosphate + ATP. Its pathway is amino-acid biosynthesis; L-histidine biosynthesis; L-histidine from 5-phospho-alpha-D-ribose 1-diphosphate: step 1/9. Catalyzes the condensation of ATP and 5-phosphoribose 1-diphosphate to form N'-(5'-phosphoribosyl)-ATP (PR-ATP). Has a crucial role in the pathway because the rate of histidine biosynthesis seems to be controlled primarily by regulation of HisG enzymatic activity. This is ATP phosphoribosyltransferase from Dictyoglomus thermophilum (strain ATCC 35947 / DSM 3960 / H-6-12).